Consider the following 424-residue polypeptide: GTPase Obg (424 aa).

The Obg domain maps to 1–158; that stretch reads MFYDQAKIYV…RNLLLELKLL (158 aa). In terms of domain architecture, OBG-type G spans 159-329; sequence ADVGLVGFPN…LVYAAAKALP (171 aa). Residues 165-172, 190-194, 212-215, 282-285, and 310-312 contribute to the GTP site; these read GFPNVGKS, FTTLV, DIPG, NKMD, and SAA. Positions 172 and 192 each coordinate Mg(2+). One can recognise an OCT domain in the interval 347–424; it reads TQASAPHRFE…IAGIEFEWEE (78 aa).

Belongs to the TRAFAC class OBG-HflX-like GTPase superfamily. OBG GTPase family. Monomer. Mg(2+) serves as cofactor.

Its subcellular location is the cytoplasm. An essential GTPase which binds GTP, GDP and possibly (p)ppGpp with moderate affinity, with high nucleotide exchange rates and a fairly low GTP hydrolysis rate. Plays a role in control of the cell cycle, stress response, ribosome biogenesis and in those bacteria that undergo differentiation, in morphogenesis control. In Desulfitobacterium hafniense (strain Y51), this protein is GTPase Obg.